Reading from the N-terminus, the 486-residue chain is Argininosuccinate lyase (486 aa).

It belongs to the lyase 1 family. Argininosuccinate lyase subfamily.

The protein localises to the cytoplasm. It carries out the reaction 2-(N(omega)-L-arginino)succinate = fumarate + L-arginine. The protein operates within amino-acid biosynthesis; L-arginine biosynthesis; L-arginine from L-ornithine and carbamoyl phosphate: step 3/3. The protein is Argininosuccinate lyase of Acidobacterium capsulatum (strain ATCC 51196 / DSM 11244 / BCRC 80197 / JCM 7670 / NBRC 15755 / NCIMB 13165 / 161).